Consider the following 229-residue polypeptide: Protein GrpE (229 aa).

The interval 1–89 (MSDFNKDDYL…AEGSSLTPLG (89 aa)) is disordered. Residues 24–36 (ASPDADGADAPSD) are compositionally biased toward low complexity. Basic and acidic residues predominate over residues 39–50 (EQLKDDMLKDAA). Over residues 65–84 (KAAAEATADAASDGDAEGSS) the composition is skewed to low complexity.

The protein belongs to the GrpE family. In terms of assembly, homodimer.

It localises to the cytoplasm. In terms of biological role, participates actively in the response to hyperosmotic and heat shock by preventing the aggregation of stress-denatured proteins, in association with DnaK and GrpE. It is the nucleotide exchange factor for DnaK and may function as a thermosensor. Unfolded proteins bind initially to DnaJ; upon interaction with the DnaJ-bound protein, DnaK hydrolyzes its bound ATP, resulting in the formation of a stable complex. GrpE releases ADP from DnaK; ATP binding to DnaK triggers the release of the substrate protein, thus completing the reaction cycle. Several rounds of ATP-dependent interactions between DnaJ, DnaK and GrpE are required for fully efficient folding. The polypeptide is Protein GrpE (Bifidobacterium animalis subsp. lactis (strain AD011)).